Here is a 574-residue protein sequence, read N- to C-terminus: 4-oxocyclohexanecarboxylate 2-dehydrogenase (574 aa).

The protein belongs to the FAD-dependent oxidoreductase 2 family. Monomer. Homodimer. It depends on FAD as a cofactor.

It carries out the reaction 4-oxocyclohexane-1-carboxylate + O2 = 4-oxocyclohex-2-ene-1-carboxylate + H2O2. Inhibited by 5,5'-dithio-bis(2- nitrobenzoate) and N-bromosuccinimide, but not by thiol and chelating reagents. Its function is as follows. Desaturase involved in a cyclohexanecarboxylate (CHCA) degradation pathway. Catalyzes the conversion of 4-oxocyclohexanecarboxylate (4-oxoCHCA) to 4-oxocyclohexenecarboxylate. Is highly specific for 4-oxocyclohexanecarboxylic acid and shows only slight activity with 4-oxo-2-methylcyclohex-2-enecarboxylic acid. This chain is 4-oxocyclohexanecarboxylate 2-dehydrogenase, found in Sinomonas cyclohexanicum (Corynebacterium cyclohexanicum).